The following is a 504-amino-acid chain: DNA-binding protein reb1 (504 aa).

The segment at D30–I51 is disordered. HTH myb-type domains follow at residues N308 to D361 and K362 to S422. 2 consecutive DNA-binding regions (H-T-H motif) follow at residues W335 to V357 and W395 to T418.

It localises to the nucleus. Functionally, DNA-binding protein that recognizes sites within both the enhancer and the promoter of rRNA transcription, as well as upstream of many genes transcribed by RNA polymerase II. Has a role in the termination of RNA polymerase I catalyzed transcription. This Schizosaccharomyces pombe (strain 972 / ATCC 24843) (Fission yeast) protein is DNA-binding protein reb1 (reb1).